The following is a 408-amino-acid chain: 4-O-methyl-glucuronoyl methylesterase 1 (408 aa).

The signal sequence occupies residues 1–19; sequence MASSSRFAALLLLALPALA. Disulfide bonds link Cys-31-Cys-65, Cys-218-Cys-354, and Cys-250-Cys-326. A GXSYXG catalytic site motif motif is present at residues 217-222; sequence GCSRDG. Ser-219 functions as the Nucleophile in the catalytic mechanism. Positions 223, 265, and 273 each coordinate substrate. N-linked (GlcNAc...) asparagine glycosylation is present at Asn-287. Position 317 (Trp-317) interacts with substrate. Asn-350 carries an N-linked (GlcNAc...) asparagine glycan. His-353 serves as the catalytic Proton donor/acceptor. N-linked (GlcNAc...) asparagine glycans are attached at residues Asn-390, Asn-395, and Asn-401.

The protein belongs to the carbohydrate esterase 15 (CE15) family.

Its subcellular location is the secreted. The enzyme catalyses a 4-O-methyl-alpha-D-glucuronosyl ester derivative + H2O = 4-O-methyl-alpha-D-glucuronate derivative + an alcohol + H(+). Its function is as follows. Glucuronoyl esterase which may play a significant role in biomass degradation, as it is considered to disconnect hemicellulose from lignin through the hydrolysis of the ester bond between 4-O-methyl-D-glucuronic acid residues of glucuronoxylans and aromatic alcohols of lignin. Can hydrolyze benzyl glucuronic acid (BnGlcA), allyl glucuronic acid (allylGlcA) and to a lower degree methyl glucuronic acid (MeGlcA) in vitro. This chain is 4-O-methyl-glucuronoyl methylesterase 1, found in Wolfiporia cocos (strain MD-104) (Brown rot fungus).